The following is a 745-amino-acid chain: Probable copper-transporting ATPase PacS (745 aa).

The Cytoplasmic segment spans residues 1–94 (MAQTINLQLE…PVFSAKLVTG (94 aa)). The region spanning 3-68 (QTINLQLEGM…AVERAGYHAR (66 aa)) is the HMA domain. 2 residues coordinate a metal cation: Cys14 and Cys17. The helical transmembrane segment at 95 to 115 (LVISAVLFFGSLPMMLGVNIP) threads the bilayer. Topologically, residues 116–125 (HFPHIFHDPW) are extracellular. The chain crosses the membrane as a helical span at residues 126-145 (LQWLLATPVQFWSGAEFYRG). Topologically, residues 146-152 (AWKSVRT) are cytoplasmic. The chain crosses the membrane as a helical span at residues 153-173 (RSATMDTLVALGTSAAYFYSV). At 174–193 (AITLFPQWLTSQGLAAHVYF) the chain is on the extracellular side. Residues 194-214 (EAAAVVITLILLGRSLEQRAR) traverse the membrane as a helical segment. Topologically, residues 215–342 (RETSAAIRKL…KAPIQHFVDR (128 aa)) are cytoplasmic. The chain crosses the membrane as a helical span at residues 343-365 (ITHWFVPTVIVVAIAAFCIWWLT). The Extracellular portion of the chain corresponds to 366-372 (TGNITLA). Residues 373 to 390 (VLTLVEVLIIACPCALGL) traverse the membrane as a helical segment. Topologically, residues 391-543 (ATPTSVMVGT…QAQQWEKEQK (153 aa)) are cytoplasmic. Asp428 (4-aspartylphosphate intermediate) is an active-site residue. Residues 544–564 (TVIWLAVDTEVKALLAIADAI) traverse the membrane as a helical segment. Residues 565–687 (KPSSPQVVQA…KLSRATMGNI (123 aa)) are Extracellular-facing. The Mg(2+) site is built by Asp633 and Asp637. Residues 688–707 (RQNLFFAFIYNVIGIPVAAG) traverse the membrane as a helical segment. Residues 708 to 719 (LFYPLFGLLLNP) are Cytoplasmic-facing. A helical transmembrane segment spans residues 720 to 738 (ILAGAAMAFSSVSVVTNAL). The Extracellular segment spans residues 739-745 (RLKKFCP).

It belongs to the cation transport ATPase (P-type) (TC 3.A.3) family. Type IB subfamily.

The protein localises to the cell membrane. It carries out the reaction Cu(+)(in) + ATP + H2O = Cu(+)(out) + ADP + phosphate + H(+). Functionally, may play a role in the osmotic adaptation. This chain is Probable copper-transporting ATPase PacS (pacS), found in Synechocystis sp. (strain ATCC 27184 / PCC 6803 / Kazusa).